We begin with the raw amino-acid sequence, 808 residues long: Leucine--tRNA ligase (808 aa).

Residues 40–51 carry the 'HIGH' region motif; it reads PYPSGQGLHVGH. The short motif at 580-584 is the 'KMSKS' region element; that stretch reads KMSKS. ATP is bound at residue Lys-583.

It belongs to the class-I aminoacyl-tRNA synthetase family.

Its subcellular location is the cytoplasm. It carries out the reaction tRNA(Leu) + L-leucine + ATP = L-leucyl-tRNA(Leu) + AMP + diphosphate. The protein is Leucine--tRNA ligase of Leuconostoc mesenteroides subsp. mesenteroides (strain ATCC 8293 / DSM 20343 / BCRC 11652 / CCM 1803 / JCM 6124 / NCDO 523 / NBRC 100496 / NCIMB 8023 / NCTC 12954 / NRRL B-1118 / 37Y).